A 224-amino-acid polypeptide reads, in one-letter code: UPF0111 protein TC_0063 (224 aa).

The protein belongs to the UPF0111 family.

The chain is UPF0111 protein TC_0063 from Chlamydia muridarum (strain MoPn / Nigg).